The chain runs to 202 residues: Matrix protein (202 aa).

The short motif at 35–38 is the PPXY motif element; sequence PPEY. Residues 115–151 form an essential for glycoprotein binding region; it reads KLRRTLIFQWADSRGPLEGEELEYSQEITWDDDTEFV.

The protein belongs to the lyssavirus matrix protein family. In terms of assembly, homomultimer. Interacts with nucleoprotein and with the cytoplasmic domain of glycoprotein. Interacts with host ATP6V1A; this interaction plays an important role in virion uncoating after viral entry.

The protein localises to the virion membrane. Its subcellular location is the host endomembrane system. The protein resides in the host cytoplasm. In terms of biological role, plays a major role in assembly, budding and uncoating of virion after membrane fusion. Completely covers the ribonucleoprotein coil and keep it in condensed bullet-shaped form. Inhibits viral transcription and stimulates replication. Plays a major role in early induction of TRAIL-mediated apoptosis in infected neurons. Inhibits the integrated stress response (ISR) in the infected cell by blocking the formation of stress granules. The polypeptide is Matrix protein (M) (Rabies virus (strain CVS-11) (RABV)).